Here is a 312-residue protein sequence, read N- to C-terminus: Lipoyl synthase (312 aa).

Basic and acidic residues predominate over residues 1-10 (MNEAPAEKQK). Residues 1–20 (MNEAPAEKQKPQQGKRFSER) are disordered. Cysteine 51, cysteine 56, cysteine 62, cysteine 77, cysteine 81, cysteine 84, and serine 290 together coordinate [4Fe-4S] cluster. Positions 63-280 (WSRKTATYLA…RSVGESLGLF (218 aa)) constitute a Radical SAM core domain.

The protein belongs to the radical SAM superfamily. Lipoyl synthase family. It depends on [4Fe-4S] cluster as a cofactor.

It is found in the cytoplasm. It carries out the reaction [[Fe-S] cluster scaffold protein carrying a second [4Fe-4S](2+) cluster] + N(6)-octanoyl-L-lysyl-[protein] + 2 oxidized [2Fe-2S]-[ferredoxin] + 2 S-adenosyl-L-methionine + 4 H(+) = [[Fe-S] cluster scaffold protein] + N(6)-[(R)-dihydrolipoyl]-L-lysyl-[protein] + 4 Fe(3+) + 2 hydrogen sulfide + 2 5'-deoxyadenosine + 2 L-methionine + 2 reduced [2Fe-2S]-[ferredoxin]. It participates in protein modification; protein lipoylation via endogenous pathway; protein N(6)-(lipoyl)lysine from octanoyl-[acyl-carrier-protein]: step 2/2. In terms of biological role, catalyzes the radical-mediated insertion of two sulfur atoms into the C-6 and C-8 positions of the octanoyl moiety bound to the lipoyl domains of lipoate-dependent enzymes, thereby converting the octanoylated domains into lipoylated derivatives. The protein is Lipoyl synthase of Chlamydia felis (strain Fe/C-56) (Chlamydophila felis).